A 140-amino-acid polypeptide reads, in one-letter code: L-fucose mutarotase (140 aa).

His-22 acts as the Proton donor in catalysis. Substrate contacts are provided by residues Asp-30, Arg-107, and 129-131; that span reads YGN.

The protein belongs to the RbsD / FucU family. FucU mutarotase subfamily. In terms of assembly, homodecamer.

The protein resides in the cytoplasm. It carries out the reaction alpha-L-fucose = beta-L-fucose. Its pathway is carbohydrate metabolism; L-fucose metabolism. Its function is as follows. Involved in the anomeric conversion of L-fucose. The sequence is that of L-fucose mutarotase from Klebsiella pneumoniae subsp. pneumoniae (strain ATCC 700721 / MGH 78578).